Consider the following 70-residue polypeptide: uncharacterized protein (70 aa).

2 helical membrane-spanning segments follow: residues 19–39 and 40–60; these read VIAL…VVGL and LFKL…VRKF.

The protein resides in the cell membrane. This is an uncharacterized protein from Streptomyces coelicolor (strain ATCC BAA-471 / A3(2) / M145).